Consider the following 358-residue polypeptide: Alanine racemase (358 aa).

Catalysis depends on Lys35, which acts as the Proton acceptor; specific for D-alanine. Lys35 carries the post-translational modification N6-(pyridoxal phosphate)lysine. Arg130 provides a ligand contact to substrate. Catalysis depends on Tyr255, which acts as the Proton acceptor; specific for L-alanine. Met303 serves as a coordination point for substrate.

Belongs to the alanine racemase family. The cofactor is pyridoxal 5'-phosphate.

It catalyses the reaction L-alanine = D-alanine. It participates in amino-acid biosynthesis; D-alanine biosynthesis; D-alanine from L-alanine: step 1/1. In terms of biological role, catalyzes the interconversion of L-alanine and D-alanine. May also act on other amino acids. This chain is Alanine racemase (alr), found in Shewanella piezotolerans (strain WP3 / JCM 13877).